The sequence spans 110 residues: uncharacterized protein (110 aa).

Disordered stretches follow at residues 1–42 (MEWG…RAQQ) and 66–110 (RQLG…AAEP). Residues 36-68 (REERAQQLLDAVEQRQRQLLDTIAACEEMLRQL) are a coiled coil.

This is an uncharacterized protein from Homo sapiens (Human).